The chain runs to 611 residues: MNKLIQSKLELLPTSPGCYIHKDKNGTIIYVGKAKNLRNRVRSYFRGSHDTKTEALVSEIVDFEFIVTESNIEALLLEINLIKENKPKYNIMLKDDKSYPFIKITNETYPRLIITRQVKKDGGLYFGPYPDVGAANEIKRLLDRLFPFRKCTNPPEKVCFYYHLGQCKAHTICQVDSQYFKDLAQEVAAFLKGQDDQIIEDLRGKMAGAAQTMEFEKAAEYRDLIQSIGTLRTKQRVMAKDLQNRDVFGYYVDKGWMCVQVFFVRQGKLIERDVNLFPYYNDPDEDFLTYIGQFYQEKSHLKPNEILIPADIDEEAVRAMVDTKVLKPQRGEKKQLVNLAIKNARVSLQQKFDLLEKSIEKTQGAIENLGQLLNIPTPVRIESFDNSNIMGTSPVSAMVVFVNGKPSKKDYRKYKIKTVVGPDDYASMREVIKRRYSRVIRDGLTPPDLIVIDGGQGQVNVAKEVIQEQLGLDIPIAGLQKNDKHQTHELLFGDPLQVVELSRNSQEFFLLQRIQDEVHRFAITFHRQLRSKNSFSSQLDGIEGLGPKRKQNLMKHFKSLTKIKEASVDEIVEVGVPRAVAEAVQEKLNLKTQEQQQARLREVAEPQAEIE.

Positions 14–91 (TSPGCYIHKD…IKENKPKYNI (78 aa)) constitute a GIY-YIG domain. The 36-residue stretch at 196–231 (DQIIEDLRGKMAGAAQTMEFEKAAEYRDLIQSIGTL) folds into the UVR domain.

It belongs to the UvrC family. As to quaternary structure, interacts with UvrB in an incision complex.

It localises to the cytoplasm. In terms of biological role, the UvrABC repair system catalyzes the recognition and processing of DNA lesions. UvrC both incises the 5' and 3' sides of the lesion. The N-terminal half is responsible for the 3' incision and the C-terminal half is responsible for the 5' incision. The protein is UvrABC system protein C of Streptococcus gordonii (strain Challis / ATCC 35105 / BCRC 15272 / CH1 / DL1 / V288).